A 273-amino-acid chain; its full sequence is 2,3,4,5-tetrahydropyridine-2,6-dicarboxylate N-succinyltransferase (273 aa).

Residues Arg104 and Asp141 each contribute to the substrate site.

Belongs to the transferase hexapeptide repeat family. Homotrimer.

It localises to the cytoplasm. The catalysed reaction is (S)-2,3,4,5-tetrahydrodipicolinate + succinyl-CoA + H2O = (S)-2-succinylamino-6-oxoheptanedioate + CoA. Its pathway is amino-acid biosynthesis; L-lysine biosynthesis via DAP pathway; LL-2,6-diaminopimelate from (S)-tetrahydrodipicolinate (succinylase route): step 1/3. The sequence is that of 2,3,4,5-tetrahydropyridine-2,6-dicarboxylate N-succinyltransferase from Neisseria meningitidis serogroup A / serotype 4A (strain DSM 15465 / Z2491).